The chain runs to 1342 residues: DNA-directed RNA polymerase subunit beta (1342 aa).

The protein belongs to the RNA polymerase beta chain family. In terms of assembly, the RNAP catalytic core consists of 2 alpha, 1 beta, 1 beta' and 1 omega subunit. When a sigma factor is associated with the core the holoenzyme is formed, which can initiate transcription.

It catalyses the reaction RNA(n) + a ribonucleoside 5'-triphosphate = RNA(n+1) + diphosphate. DNA-dependent RNA polymerase catalyzes the transcription of DNA into RNA using the four ribonucleoside triphosphates as substrates. This Actinobacillus pleuropneumoniae serotype 5b (strain L20) protein is DNA-directed RNA polymerase subunit beta.